A 118-amino-acid polypeptide reads, in one-letter code: Large ribosomal subunit protein uL24 (118 aa).

Belongs to the universal ribosomal protein uL24 family. Part of the 50S ribosomal subunit.

Its function is as follows. One of two assembly initiator proteins, it binds directly to the 5'-end of the 23S rRNA, where it nucleates assembly of the 50S subunit. One of the proteins that surrounds the polypeptide exit tunnel on the outside of the subunit. The chain is Large ribosomal subunit protein uL24 from Parasynechococcus marenigrum (strain WH8102).